The sequence spans 843 residues: MASFFQQSLATGWSFKDAEDNSAEAWMPVAQVPSVVHQDLIANNKLQDPYVGFRELDARWVNEKSWTYRTVFQKPAVPAGSSVILAFDGLDTFAKVKLNGNVILESNNMFLAHRIDVTKALGADGDHVLEIDFDCAMLRARELRAKDPQHKWVGFNGDPARMGVRKAQYHWGWDWGPVLMTAGIWRDVRLEVYTARVADLWTETDLAVDHHAAQISAFAQVEGAISSSKVNFILSLHGQEVARAVAEPQDQVAKVAFDVQQPSLWWPNGYGDPTLYEISATLDQDGATVHQISKKIGIRTAEVVQRPDKHGKSFFFRINGVDIFCGGSCWIPADNLLPSISAERYRKWIELMVHGRQVMIRVWGGGCYEDDSFYQACDELGVMVWQDFMFGCGNYPTWPEMLESVEKEAIYNVRRLRHHPSIVVYVGNNEDYQVQEQQGLTYNFEDKDPQNWLKSDFPARYIYEKILPEVVQRYSPSTFYHPGSPWGDGKITSDPTVGDMHQWNVWHGTQEKYQIFDTLGGRFNSEFGMEAFPHMSTIEYFVENEKDKYPQSHVLDFHNKADGHERRIATYLVENLRTATDLETYIYLTQVVQAETMMFGYRGWRRQWGDERHCGGALLWQLNDCWPTISWAIVDYFLRPKPAFYAVARVLNPIAVGVRREHHDWSVTHAQPPKKSKFELWVASNLQKETRGMVELKFLSVDTGREIRERIVREDVIIVPNGTTDIIVDGVIDHQEYAEPHVLAARLWVDGKIVARDVDWPQPFKYLDLSGRGLEVKTVSTSDDQQTLLISAQKPVKCLVFEERDGVRVSDSAMDIVPGDEQTVTITGLKADAPPLKYKYLGQ.

Glu-430 acts as the Proton donor in catalysis. The N-linked (GlcNAc...) asparagine glycan is linked to Asn-721.

This sequence belongs to the glycosyl hydrolase 2 family. Beta-mannosidase B subfamily.

The catalysed reaction is Hydrolysis of terminal, non-reducing beta-D-mannose residues in beta-D-mannosides.. It participates in glycan metabolism; N-glycan degradation. In terms of biological role, exoglycosidase that cleaves the single beta-linked mannose residue from the non-reducing end of beta-mannosidic oligosaccharides of various complexity and length. Prefers mannobiose over mannotriose and has no activity against polymeric mannan. Is also severely restricted by galactosyl substitutions at the +1 subsite. This Aspergillus terreus (strain NIH 2624 / FGSC A1156) protein is Beta-mannosidase B (mndB).